Reading from the N-terminus, the 90-residue chain is Small ribosomal subunit protein bS16 (90 aa).

The protein belongs to the bacterial ribosomal protein bS16 family.

The sequence is that of Small ribosomal subunit protein bS16 from Moorella thermoacetica (strain ATCC 39073 / JCM 9320).